The chain runs to 291 residues: MAAPVVDAEYLRQVDRARRHLRALISSKGCAPIMLRLAWHDAGTYDVNTKTGGANGSIRYEEEYTHGSNAGLKIAIDLLEPIKAKSPKITYADLYQLAGVVAVEVTGGPTVEFIPGRRDSSVCPREGRLPDAKKGALHLRDIFYRMGLSDKDIVALSGGHTLGRAHPERSGFEGAWTQEPLKFDNSYFLELLKGESEGLLKLPTDKALLEDPSFRRYVDLYARDEDTFFKDYAESHKKLSELGFTPRSSGPASTKSDLSTGAVLAQSAVGVAVAAAVVIVSYLYEASKKSK.

His40 (proton acceptor) is an active-site residue. His160 serves as a coordination point for heme b. K(+) is bound by residues Thr161, Thr177, and Asp184. The chain crosses the membrane as a helical span at residues 263–283 (VLAQSAVGVAVAAAVVIVSYL).

It belongs to the peroxidase family. Ascorbate peroxidase subfamily. The cofactor is heme b. Expressed in leaves, stems and flowers.

The protein resides in the peroxisome membrane. The catalysed reaction is L-ascorbate + H2O2 = L-dehydroascorbate + 2 H2O. In terms of biological role, plays a key role in hydrogen peroxide removal. This chain is Probable L-ascorbate peroxidase 4, peroxisomal, found in Oryza sativa subsp. japonica (Rice).